Here is a 55-residue protein sequence, read N- to C-terminus: Large ribosomal subunit protein bL33 (55 aa).

The span at 1–11 shows a compositional bias: basic and acidic residues; it reads MAKGARDKIKL. Residues 1–24 are disordered; sequence MAKGARDKIKLESTAGTGHFYTTT. Over residues 14-24 the composition is skewed to polar residues; sequence TAGTGHFYTTT.

The protein belongs to the bacterial ribosomal protein bL33 family.

The protein is Large ribosomal subunit protein bL33 of Burkholderia multivorans (strain ATCC 17616 / 249).